We begin with the raw amino-acid sequence, 216 residues long: Flagellin B3 (216 aa).

Positions 1-11 (MLLDYIKSRRG) are excised as a propeptide.

This sequence belongs to the archaeal flagellin family.

The protein localises to the archaeal flagellum. Its function is as follows. Flagellin is the subunit protein which polymerizes to form the filaments of archaeal flagella. The sequence is that of Flagellin B3 (flaB3) from Methanocaldococcus jannaschii (strain ATCC 43067 / DSM 2661 / JAL-1 / JCM 10045 / NBRC 100440) (Methanococcus jannaschii).